The following is a 23-amino-acid chain: Basic phospholipase A2 homolog (23 aa).

Contains 7 disulfide bonds. In terms of tissue distribution, expressed by the venom gland.

It localises to the secreted. The polypeptide is Basic phospholipase A2 homolog (Trimeresurus stejnegeri (Chinese green tree viper)).